The chain runs to 557 residues: Leucine-rich glioma-inactivated protein 1 (557 aa).

An N-terminal signal peptide occupies residues 1 to 34 (MESESSRRMGNACIPLKRIAYFLCLFSVVLLTEG). Positions 35 to 72 (KKPAKPKCPAVCTCSKDNALCENARSIPRTVPPDVISL) constitute an LRRNT domain. LRR repeat units follow at residues 92–113 (SLQL…AFIG), 116–137 (HLEY…TFRG), and 140–161 (SLIH…IFKG). Residues 173–223 (NAFNCDCKLKWLVEWLGHTNATVEDIYCEGPPEYKKRKINSLSPKDFDCII) enclose the LRRCT domain. Asn192 is a glycosylation site (N-linked (GlcNAc...) asparagine). 7 EAR repeats span residues 225-267 (EFAK…EWDH), 271-313 (TFRN…KRDG), 317-364 (KFIK…KWNG), 366-415 (GFYS…QWSK), 419-462 (LFTN…KWGG), 464-506 (SFQD…NWDA), and 510-552 (KFVK…KHVI). A glycan (N-linked (GlcNAc...) asparagine) is linked at Asn277. N-linked (GlcNAc...) asparagine glycosylation is present at Asn422.

In terms of assembly, oligomer. Interacts with KCNA1 within a complex containing KCNA1, KCNA4 and KCNAB1. Part of a complex containing ADAM22, DLG4/PSD95 and CACNG2 (stargazin). Can bind to ADAM11 and ADAM23. Post-translationally, glycosylated. Expressed in the brain (at protein level). Expressed in cerebellar cortex basket cell terminals (at protein level). Highly expressed in the dentate gyrus and CA3 field of the hippocampus.

The protein resides in the secreted. The protein localises to the synapse. Its subcellular location is the cytoplasm. It localises to the golgi apparatus. It is found in the endoplasmic reticulum. Its function is as follows. Regulates voltage-gated potassium channels assembled from KCNA1, KCNA4 and KCNAB1. It slows down channel inactivation by precluding channel closure mediated by the KCNAB1 subunit. Ligand for ADAM22 that positively regulates synaptic transmission mediated by AMPA-type glutamate receptors. Plays a role in suppressing the production of MMP1/3 through the phosphatidylinositol 3-kinase/ERK pathway. In Mus musculus (Mouse), this protein is Leucine-rich glioma-inactivated protein 1.